The sequence spans 307 residues: Pantothenate kinase (307 aa).

Residue Gly-90 to Ser-97 coordinates ATP.

The protein belongs to the prokaryotic pantothenate kinase family.

The protein localises to the cytoplasm. The catalysed reaction is (R)-pantothenate + ATP = (R)-4'-phosphopantothenate + ADP + H(+). Its pathway is cofactor biosynthesis; coenzyme A biosynthesis; CoA from (R)-pantothenate: step 1/5. This is Pantothenate kinase from Enterococcus faecalis (strain ATCC 700802 / V583).